Consider the following 373-residue polypeptide: Cobalt-precorrin-5B C(1)-methyltransferase (373 aa).

Belongs to the CbiD family.

It carries out the reaction Co-precorrin-5B + S-adenosyl-L-methionine = Co-precorrin-6A + S-adenosyl-L-homocysteine. It functions in the pathway cofactor biosynthesis; adenosylcobalamin biosynthesis; cob(II)yrinate a,c-diamide from sirohydrochlorin (anaerobic route): step 6/10. Its function is as follows. Catalyzes the methylation of C-1 in cobalt-precorrin-5B to form cobalt-precorrin-6A. This Polaromonas sp. (strain JS666 / ATCC BAA-500) protein is Cobalt-precorrin-5B C(1)-methyltransferase.